Reading from the N-terminus, the 58-residue chain is Ribulose bisphosphate carboxylase large chain (58 aa).

Residues Met1 to Ser2 constitute a propeptide that is removed on maturation. Pro3 is modified (N-acetylproline). Residue Lys14 is modified to N6,N6,N6-trimethyllysine.

The protein belongs to the RuBisCO large chain family. Type I subfamily. In terms of assembly, heterohexadecamer of 8 large chains and 8 small chains.

Its subcellular location is the plastid. The protein resides in the chloroplast. The enzyme catalyses 2 (2R)-3-phosphoglycerate + 2 H(+) = D-ribulose 1,5-bisphosphate + CO2 + H2O. The catalysed reaction is D-ribulose 1,5-bisphosphate + O2 = 2-phosphoglycolate + (2R)-3-phosphoglycerate + 2 H(+). Functionally, ruBisCO catalyzes two reactions: the carboxylation of D-ribulose 1,5-bisphosphate, the primary event in carbon dioxide fixation, as well as the oxidative fragmentation of the pentose substrate in the photorespiration process. Both reactions occur simultaneously and in competition at the same active site. The polypeptide is Ribulose bisphosphate carboxylase large chain (rbcL) (Rosa damascena (Damask rose)).